We begin with the raw amino-acid sequence, 593 residues long: Mitoguardin 2 (593 aa).

Helical transmembrane passes span 11–31 (MIQA…TTFG) and 42–62 (PGLR…ALAA). Disordered regions lie at residues 101–134 (KKGY…HSGS) and 195–228 (LSVG…EPES). A compositionally biased stretch (polar residues) spans 107 to 123 (RRVQSPSSKSNDTLSGI). Residues 124 to 134 (SSIEPSKHSGS) show a composition bias toward low complexity. Ser132 carries the phosphoserine modification. At Thr206 the chain carries Phosphothreonine. Residues Ser220, Ser224, and Ser228 each carry the phosphoserine modification. Thr273 is subject to Phosphothreonine. Phosphoserine is present on residues Ser276 and Ser295. Residues 292-298 (SFFSATE) carry the FFAT motif. Residues 563-583 (ILLGYLGVPAASSIGLNGVLP) traverse the membrane as a helical segment.

The protein belongs to the mitoguardin family. Homodimer and heterodimer; forms heterodimers with MIGA1. Interacts with PLD6/MitoPLD. Interacts (via phosphorylated FFAT motif) with MOSPD2. In terms of processing, phosphorylation at Ser-295 of the FFAT motif activates interaction with MOSPD2.

It is found in the mitochondrion outer membrane. Functionally, regulator of mitochondrial fusion: acts by forming homo- and heterodimers at the mitochondrial outer membrane and facilitating the formation of PLD6/MitoPLD dimers. May act by regulating phospholipid metabolism via PLD6/MitoPLD. This is Mitoguardin 2 from Bos taurus (Bovine).